A 111-amino-acid chain; its full sequence is MTDLEEIRRKKMLELQQKAQQQAMEAEAQEQMRQQLEMQKKQIMMQILTPEARSRLANLRLTRPDFVEQIELQLIQLAQMGRVRSKITDEQLKELLKRVAGKKREIKISRK.

It belongs to the PDCD5 family.

Its function is as follows. DNA-binding protein which can interact with a randomly chosen 20-mer of double-stranded DNA. The chain is DNA-binding protein MTH_1615 from Methanothermobacter thermautotrophicus (strain ATCC 29096 / DSM 1053 / JCM 10044 / NBRC 100330 / Delta H) (Methanobacterium thermoautotrophicum).